Consider the following 434-residue polypeptide: Glutamate-1-semialdehyde 2,1-aminomutase (434 aa).

Lysine 265 bears the N6-(pyridoxal phosphate)lysine mark.

The protein belongs to the class-III pyridoxal-phosphate-dependent aminotransferase family. HemL subfamily. In terms of assembly, homodimer. Pyridoxal 5'-phosphate is required as a cofactor.

It localises to the cytoplasm. It carries out the reaction (S)-4-amino-5-oxopentanoate = 5-aminolevulinate. It functions in the pathway porphyrin-containing compound metabolism; protoporphyrin-IX biosynthesis; 5-aminolevulinate from L-glutamyl-tRNA(Glu): step 2/2. The protein is Glutamate-1-semialdehyde 2,1-aminomutase of Ruminiclostridium cellulolyticum (strain ATCC 35319 / DSM 5812 / JCM 6584 / H10) (Clostridium cellulolyticum).